Reading from the N-terminus, the 208-residue chain is Small ribosomal subunit protein uS4 (208 aa).

Positions 98-161 constitute an S4 RNA-binding domain; it reads RRLDNVIYRL…RKIPVLAEAQ (64 aa).

The protein belongs to the universal ribosomal protein uS4 family. Part of the 30S ribosomal subunit. Contacts protein S5. The interaction surface between S4 and S5 is involved in control of translational fidelity.

Functionally, one of the primary rRNA binding proteins, it binds directly to 16S rRNA where it nucleates assembly of the body of the 30S subunit. Its function is as follows. With S5 and S12 plays an important role in translational accuracy. The protein is Small ribosomal subunit protein uS4 of Nitratidesulfovibrio vulgaris (strain ATCC 29579 / DSM 644 / CCUG 34227 / NCIMB 8303 / VKM B-1760 / Hildenborough) (Desulfovibrio vulgaris).